Here is a 473-residue protein sequence, read N- to C-terminus: Aspartyl/glutamyl-tRNA(Asn/Gln) amidotransferase subunit B (473 aa).

Belongs to the GatB/GatE family. GatB subfamily. As to quaternary structure, heterotrimer of A, B and C subunits.

The enzyme catalyses L-glutamyl-tRNA(Gln) + L-glutamine + ATP + H2O = L-glutaminyl-tRNA(Gln) + L-glutamate + ADP + phosphate + H(+). It catalyses the reaction L-aspartyl-tRNA(Asn) + L-glutamine + ATP + H2O = L-asparaginyl-tRNA(Asn) + L-glutamate + ADP + phosphate + 2 H(+). Allows the formation of correctly charged Asn-tRNA(Asn) or Gln-tRNA(Gln) through the transamidation of misacylated Asp-tRNA(Asn) or Glu-tRNA(Gln) in organisms which lack either or both of asparaginyl-tRNA or glutaminyl-tRNA synthetases. The reaction takes place in the presence of glutamine and ATP through an activated phospho-Asp-tRNA(Asn) or phospho-Glu-tRNA(Gln). The protein is Aspartyl/glutamyl-tRNA(Asn/Gln) amidotransferase subunit B of Francisella tularensis subsp. novicida (strain U112).